We begin with the raw amino-acid sequence, 464 residues long: Aspartyl protease 37 (464 aa).

Positions 1-19 are cleaved as a signal peptide; the sequence is MNAAVLLLLLALAALPASC. Residue asparagine 41 is glycosylated (N-linked (GlcNAc...) asparagine). The 368-residue stretch at 89-456 folds into the Peptidase A1 domain; the sequence is YLVKLGIGTP…NLRRGRVTFV (368 aa). The active site involves aspartate 107. A disulfide bridge connects residues cysteine 117 and cysteine 123. Residues asparagine 174 and asparagine 261 are each glycosylated (N-linked (GlcNAc...) asparagine). Low complexity predominate over residues 299-311; that stretch reads TTTTTATATATAP. The segment at 299 to 319 is disordered; the sequence is TTTTTATATATAPAPAPTPSP. An N-linked (GlcNAc...) asparagine glycan is attached at asparagine 320. Aspartate 337 is an active-site residue. An intrachain disulfide couples cysteine 376 to cysteine 420.

Belongs to the peptidase A1 family.

Anther-specific aspartic protease involved in tapetal programmed cell death (PCD). Directly regulated by the transcription factor EAT1/DTD in anthers during tapetum PCD and degeneration. This chain is Aspartyl protease 37, found in Oryza sativa subsp. japonica (Rice).